The sequence spans 893 residues: MGISFSIPFDPCVNKVSQWLDMKGSYTHNLEKNLVALETTMEELKAKRDDLLRRLKREEDRGLQRLSEFQVWLNRVATVEDIIITLLRDRDVEIQRLCLCRFCSKNLTTSYRYGKSVFLRLREVEKLKGEVFGVITEQASTSAFEERPLQPTIVGQKKMLDKAWKHLMEDGTGIMGMYGMGGVGKTTLLTQLFNMFNKDKCGFDIGIWVVVSQEVNVEKIQDEIAQKLGLGGHEWTQRDISQKGVHLFNFLKNKKFVLFLDDLWDKVELANIGVPDPRTQKGCKLAFTSRSLNVCTSMGDEEPMEVQCLEENVAFDLFQKKVGQKTLGSDPGIPQLARIVAKKCCGLPLALNVIGETMSCKRTIQEWRNAIHVLNSYAAEFIGMEDKILPLLKYSYDNLKGEHVKSSLLYCALYPEDAKIRKEDLIEHWICEEIIDGSEGIEKAEDKGYDIIGSLVRASLLMECVDLKGKSSVIMHDVVREMALWIASELGIQKEAFIVRAGVGVREIPKVKNWNVVRRMSLMGNKIHHLVGSYECMELTTLLLGEGEYGSIWRWSEIKTISSEFFNCMPKLAVLDLSHNQSLFELPEEISNLVSLKYLNLSHTGIRHLSKGIQELKKIIHLNLEHTSKLESIDGISSLHNLKVLKLYGSRLPWDLNTVKELETLEHLEILTTTIDPRAKQFLSSHRLMSRSRLLQIFGSNIFSPDRQLESLSVSTDKLREFEIMCCSISEIKMGGICNFLSLVDVTIYNCEGLRELTFLIFAPKLRSLSVVDAKDLEDIINEEKACEGEDSGIVPFPELKYLNLDDLPKLKNIYRRPLPFLCLEKITIGECPNLRKLPLDSRSGKQGENGCIIHYKDSRWLKGVKWADEATKKRFLPSCEHRLERCETIFED.

The stretch at glycine 24–glutamate 68 forms a coiled coil. Residues threonine 136 to glycine 440 enclose the NB-ARC domain. Position 179-186 (glycine 179–threonine 186) interacts with ATP. LRR repeat units follow at residues valine 516–methionine 537, glutamate 538–lysine 559, lysine 571–leucine 593, serine 595–lysine 617, lysine 618–histidine 640, and asparagine 641–glutamate 663.

Belongs to the disease resistance NB-LRR family.

Functionally, probable disease resistance protein. The polypeptide is Probable disease resistance protein At1g62630 (Arabidopsis thaliana (Mouse-ear cress)).